Here is a 195-residue protein sequence, read N- to C-terminus: Imidazoleglycerol-phosphate dehydratase (195 aa).

This sequence belongs to the imidazoleglycerol-phosphate dehydratase family.

It localises to the cytoplasm. The enzyme catalyses D-erythro-1-(imidazol-4-yl)glycerol 3-phosphate = 3-(imidazol-4-yl)-2-oxopropyl phosphate + H2O. Its pathway is amino-acid biosynthesis; L-histidine biosynthesis; L-histidine from 5-phospho-alpha-D-ribose 1-diphosphate: step 6/9. The chain is Imidazoleglycerol-phosphate dehydratase from Exiguobacterium sp. (strain ATCC BAA-1283 / AT1b).